The following is a 215-amino-acid chain: N-(5'-phosphoribosyl)anthranilate isomerase (215 aa).

This sequence belongs to the TrpF family.

The enzyme catalyses N-(5-phospho-beta-D-ribosyl)anthranilate = 1-(2-carboxyphenylamino)-1-deoxy-D-ribulose 5-phosphate. The protein operates within amino-acid biosynthesis; L-tryptophan biosynthesis; L-tryptophan from chorismate: step 3/5. In Rhizobium meliloti (strain 1021) (Ensifer meliloti), this protein is N-(5'-phosphoribosyl)anthranilate isomerase.